The chain runs to 104 residues: Large ribosomal subunit protein eL42 (104 aa).

The protein belongs to the eukaryotic ribosomal protein eL42 family. As to quaternary structure, component of the large ribosomal subunit. Mature ribosomes consist of a small (40S) and a large (60S) subunit. The 40S subunit contains about 32 different proteins and 1 molecule of RNA (18S). The 60S subunit contains about 42 different proteins and 3 molecules of RNA (28S, 5.8S and 5S).

It localises to the cytoplasm. Its function is as follows. Component of the ribosome, a large ribonucleoprotein complex responsible for the synthesis of proteins in the cell. The small ribosomal subunit (SSU) binds messenger RNAs (mRNAs) and translates the encoded message by selecting cognate aminoacyl-transfer RNA (tRNA) molecules. The large subunit (LSU) contains the ribosomal catalytic site termed the peptidyl transferase center (PTC), which catalyzes the formation of peptide bonds, thereby polymerizing the amino acids delivered by tRNAs into a polypeptide chain. The nascent polypeptides leave the ribosome through a tunnel in the LSU and interact with protein factors that function in enzymatic processing, targeting, and the membrane insertion of nascent chains at the exit of the ribosomal tunnel. The polypeptide is Large ribosomal subunit protein eL42 (Plasmodium falciparum (isolate 3D7)).